Reading from the N-terminus, the 245-residue chain is tRNA1(Val) (adenine(37)-N6)-methyltransferase (245 aa).

Belongs to the methyltransferase superfamily. tRNA (adenine-N(6)-)-methyltransferase family.

It is found in the cytoplasm. It catalyses the reaction adenosine(37) in tRNA1(Val) + S-adenosyl-L-methionine = N(6)-methyladenosine(37) in tRNA1(Val) + S-adenosyl-L-homocysteine + H(+). Specifically methylates the adenine in position 37 of tRNA(1)(Val) (anticodon cmo5UAC). This is tRNA1(Val) (adenine(37)-N6)-methyltransferase from Salmonella typhi.